Consider the following 148-residue polypeptide: Large ribosomal subunit protein bL9 (148 aa).

Belongs to the bacterial ribosomal protein bL9 family.

Binds to the 23S rRNA. The polypeptide is Large ribosomal subunit protein bL9 (Bacillus mycoides (strain KBAB4) (Bacillus weihenstephanensis)).